A 32-amino-acid polypeptide reads, in one-letter code: Trypsin inhibitor 2b (32 aa).

3 disulfides stabilise this stretch: C3/C20, C10/C22, and C16/C29.

This sequence belongs to the protease inhibitor I7 (squash-type serine protease inhibitor) family.

The protein resides in the secreted. Inhibits trypsin. The sequence is that of Trypsin inhibitor 2b from Cucumis sativus (Cucumber).